The following is a 398-amino-acid chain: DNA polymerase IV (398 aa).

A UmuC domain is found at 5-187; it reads IFLVDMNAFF…LSIKSMHGVG (183 aa). Aspartate 9 and aspartate 105 together coordinate Mg(2+). The active site involves glutamate 106.

Belongs to the DNA polymerase type-Y family. In terms of assembly, monomer. It depends on Mg(2+) as a cofactor.

The protein localises to the cytoplasm. It carries out the reaction DNA(n) + a 2'-deoxyribonucleoside 5'-triphosphate = DNA(n+1) + diphosphate. Its function is as follows. Poorly processive, error-prone DNA polymerase involved in untargeted mutagenesis. Copies undamaged DNA at stalled replication forks, which arise in vivo from mismatched or misaligned primer ends. These misaligned primers can be extended by PolIV. Exhibits no 3'-5' exonuclease (proofreading) activity. May be involved in translesional synthesis, in conjunction with the beta clamp from PolIII. The chain is DNA polymerase IV from Alkaliphilus oremlandii (strain OhILAs) (Clostridium oremlandii (strain OhILAs)).